The primary structure comprises 577 residues: Proline--tRNA ligase (577 aa).

It belongs to the class-II aminoacyl-tRNA synthetase family. ProS type 1 subfamily. In terms of assembly, homodimer.

It is found in the cytoplasm. It carries out the reaction tRNA(Pro) + L-proline + ATP = L-prolyl-tRNA(Pro) + AMP + diphosphate. Its function is as follows. Catalyzes the attachment of proline to tRNA(Pro) in a two-step reaction: proline is first activated by ATP to form Pro-AMP and then transferred to the acceptor end of tRNA(Pro). As ProRS can inadvertently accommodate and process non-cognate amino acids such as alanine and cysteine, to avoid such errors it has two additional distinct editing activities against alanine. One activity is designated as 'pretransfer' editing and involves the tRNA(Pro)-independent hydrolysis of activated Ala-AMP. The other activity is designated 'posttransfer' editing and involves deacylation of mischarged Ala-tRNA(Pro). The misacylated Cys-tRNA(Pro) is not edited by ProRS. The polypeptide is Proline--tRNA ligase (Helicobacter pylori (strain P12)).